We begin with the raw amino-acid sequence, 435 residues long: Ribulose bisphosphate carboxylase large chain (435 aa).

Substrate-binding residues include Asn104 and Thr154. Residue Lys156 is the Proton acceptor of the active site. Lys158 is a substrate binding site. Positions 182, 184, and 185 each coordinate Mg(2+). Lys182 bears the N6-carboxylysine mark. Catalysis depends on His275, which acts as the Proton acceptor. Substrate contacts are provided by Arg276, His308, and Ser360.

It belongs to the RuBisCO large chain family. Type I subfamily. In terms of assembly, heterohexadecamer of 8 large chains and 8 small chains. Requires Mg(2+) as cofactor.

It is found in the plastid. The protein localises to the chloroplast. The catalysed reaction is 2 (2R)-3-phosphoglycerate + 2 H(+) = D-ribulose 1,5-bisphosphate + CO2 + H2O. It catalyses the reaction D-ribulose 1,5-bisphosphate + O2 = 2-phosphoglycolate + (2R)-3-phosphoglycerate + 2 H(+). RuBisCO catalyzes two reactions: the carboxylation of D-ribulose 1,5-bisphosphate, the primary event in carbon dioxide fixation, as well as the oxidative fragmentation of the pentose substrate in the photorespiration process. Both reactions occur simultaneously and in competition at the same active site. This is Ribulose bisphosphate carboxylase large chain from Euglena pisciformis.